The primary structure comprises 325 residues: Electron transfer flavoprotein subunit alpha (325 aa).

262 to 290 lines the FAD pocket; that stretch reads LYIACGISGAIQHLAGMSNSKVIVAINKD.

Belongs to the ETF alpha-subunit/FixB family. In terms of assembly, heterodimer of an alpha and a beta subunit. It depends on FAD as a cofactor.

The electron transfer flavoprotein serves as a specific electron acceptor for other dehydrogenases. It transfers the electrons to the main respiratory chain via ETF-ubiquinone oxidoreductase (ETF dehydrogenase). This Bacillus subtilis (strain 168) protein is Electron transfer flavoprotein subunit alpha (etfA).